We begin with the raw amino-acid sequence, 303 residues long: ATP synthase gamma chain (303 aa).

This sequence belongs to the ATPase gamma chain family. In terms of assembly, F-type ATPases have 2 components, CF(1) - the catalytic core - and CF(0) - the membrane proton channel. CF(1) has five subunits: alpha(3), beta(3), gamma(1), delta(1), epsilon(1). CF(0) has three main subunits: a, b and c.

It localises to the cell inner membrane. In terms of biological role, produces ATP from ADP in the presence of a proton gradient across the membrane. The gamma chain is believed to be important in regulating ATPase activity and the flow of protons through the CF(0) complex. This chain is ATP synthase gamma chain, found in Elusimicrobium minutum (strain Pei191).